A 250-amino-acid chain; its full sequence is tRNA (guanine-N(1)-)-methyltransferase (250 aa).

S-adenosyl-L-methionine is bound by residues Gly113 and 134 to 139 (IGDYVL).

It belongs to the RNA methyltransferase TrmD family. As to quaternary structure, homodimer.

The protein resides in the cytoplasm. The enzyme catalyses guanosine(37) in tRNA + S-adenosyl-L-methionine = N(1)-methylguanosine(37) in tRNA + S-adenosyl-L-homocysteine + H(+). In terms of biological role, specifically methylates guanosine-37 in various tRNAs. The polypeptide is tRNA (guanine-N(1)-)-methyltransferase (Buchnera aphidicola subsp. Baizongia pistaciae (strain Bp)).